The following is a 426-amino-acid chain: SrfA-induced gene K protein (426 aa).

The signal sequence occupies residues 1–23 (MKKMKILSFFILSLAIIIGIVYS). N-linked (GlcNAc...) asparagine glycans are attached at residues asparagine 64, asparagine 136, asparagine 160, and asparagine 226. 2 consecutive Laminin EGF-like domains span residues 325–348 (DNQC…GMVL) and 384–408 (CNGT…GGEV). 3 disulfide bridges follow: cysteine 330–cysteine 339, cysteine 342–cysteine 358, and cysteine 370–cysteine 388. Residue asparagine 385 is glycosylated (N-linked (GlcNAc...) asparagine).

This is SrfA-induced gene K protein (sigK) from Dictyostelium discoideum (Social amoeba).